The primary structure comprises 348 residues: Flagellar P-ring protein (348 aa).

Positions 1–16 are cleaved as a signal peptide; the sequence is MRVLTIFLLFMTSIFA.

It belongs to the FlgI family. The basal body constitutes a major portion of the flagellar organelle and consists of four rings (L,P,S, and M) mounted on a central rod.

It is found in the periplasm. It localises to the bacterial flagellum basal body. Its function is as follows. Assembles around the rod to form the L-ring and probably protects the motor/basal body from shearing forces during rotation. The sequence is that of Flagellar P-ring protein from Campylobacter jejuni subsp. jejuni serotype O:6 (strain 81116 / NCTC 11828).